A 1130-amino-acid chain; its full sequence is BTB/POZ domain-containing protein 7 (1130 aa).

Positions 1–10 are enriched in polar residues; that stretch reads MGANASNYPH. Positions 1–24 are disordered; that stretch reads MGANASNYPHSCSPRVGGNSQAQQ. G2 carries N-myristoyl glycine lipidation. BTB domains follow at residues 142-211 and 247-341; these read TDVD…GMED and YDVV…DLSV. A BACK domain is found at 413–479; sequence YGSKWVHRQA…WGEHQLMKRI (67 aa). S722 carries the phosphoserine modification. Disordered regions lie at residues 898 to 1050 and 1062 to 1130; these read SEAG…PAHV and FGLT…KSAL. 2 stretches are compositionally biased toward basic and acidic residues: residues 923-935 and 996-1005; these read PTLEQKADGRENQ and KKQEDPRREY. The residue at position 1008 (S1008) is a Phosphoserine. A compositionally biased stretch (polar residues) spans 1063 to 1075; that stretch reads GLTSNRPPSHSAC. Composition is skewed to basic and acidic residues over residues 1080-1090 and 1101-1112; these read LEERSSRRLTD and RNADLERGDSIS.

Specifically expressed in embryonic epithelia.

It localises to the nucleus. Functionally, acts as a mediator of epithelial dynamics and organ branching by promoting cleft progression. Induced following accumulation of fibronectin in forming clefts, leading to local expression of the cell-scattering SNAIL2 and suppression of E-cadherin levels, thereby altering cell morphology and reducing cell-cell adhesion. This stimulates cell separation at the base of forming clefts by local, dynamic intercellular gap formation and promotes cleft progression. This is BTB/POZ domain-containing protein 7 (Btbd7) from Mus musculus (Mouse).